Consider the following 153-residue polypeptide: 3-dehydroquinate dehydratase (153 aa).

Residue tyrosine 26 is the Proton acceptor of the active site. Residues asparagine 77, histidine 83, and aspartate 90 each coordinate substrate. Residue histidine 103 is the Proton donor of the active site. Residues 104–105 (LS) and arginine 114 contribute to the substrate site.

Belongs to the type-II 3-dehydroquinase family. In terms of assembly, homododecamer.

The enzyme catalyses 3-dehydroquinate = 3-dehydroshikimate + H2O. Its pathway is metabolic intermediate biosynthesis; chorismate biosynthesis; chorismate from D-erythrose 4-phosphate and phosphoenolpyruvate: step 3/7. Catalyzes a trans-dehydration via an enolate intermediate. The polypeptide is 3-dehydroquinate dehydratase (Colwellia psychrerythraea (strain 34H / ATCC BAA-681) (Vibrio psychroerythus)).